We begin with the raw amino-acid sequence, 634 residues long: Chaperone protein HtpG (634 aa).

The interval 1–343 (MTEAENRVTL…SDSLPLNVSR (343 aa)) is a; substrate-binding. The tract at residues 344–560 (EILQENKQLE…SYGMSRTMER (217 aa)) is b. The interval 561-634 (IMKSAGQNIP…KLNGLLQSLL (74 aa)) is c.

The protein belongs to the heat shock protein 90 family. Homodimer.

The protein localises to the cytoplasm. Functionally, molecular chaperone. Has ATPase activity. This Methylococcus capsulatus (strain ATCC 33009 / NCIMB 11132 / Bath) protein is Chaperone protein HtpG.